We begin with the raw amino-acid sequence, 133 residues long: ATP synthase epsilon chain, chloroplastic (133 aa).

Belongs to the ATPase epsilon chain family. As to quaternary structure, F-type ATPases have 2 components, CF(1) - the catalytic core - and CF(0) - the membrane proton channel. CF(1) has five subunits: alpha(3), beta(3), gamma(1), delta(1), epsilon(1). CF(0) has three main subunits: a, b and c.

It is found in the plastid. It localises to the chloroplast thylakoid membrane. Produces ATP from ADP in the presence of a proton gradient across the membrane. The sequence is that of ATP synthase epsilon chain, chloroplastic from Chara vulgaris (Common stonewort).